We begin with the raw amino-acid sequence, 350 residues long: Ubiquitin carboxyl-terminal hydrolase 11 (350 aa).

The 296-residue stretch at Lys49–Glu344 folds into the USP domain. Residue Cys59 is the Nucleophile of the active site. His302 functions as the Proton acceptor in the catalytic mechanism.

Belongs to the peptidase C19 family.

It carries out the reaction Thiol-dependent hydrolysis of ester, thioester, amide, peptide and isopeptide bonds formed by the C-terminal Gly of ubiquitin (a 76-residue protein attached to proteins as an intracellular targeting signal).. This chain is Ubiquitin carboxyl-terminal hydrolase 11 (ubp11), found in Schizosaccharomyces pombe (strain 972 / ATCC 24843) (Fission yeast).